The primary structure comprises 948 residues: Bifunctional glutamine synthetase adenylyltransferase/adenylyl-removing enzyme (948 aa).

The tract at residues 1–445 (MAPPPDTSGS…IFTEVIAEPP (445 aa)) is adenylyl removase. The adenylyl transferase stretch occupies residues 451–948 (EPLLDGGEAE…WKQIIEAPVF (498 aa)).

It belongs to the GlnE family. Mg(2+) serves as cofactor.

The catalysed reaction is [glutamine synthetase]-O(4)-(5'-adenylyl)-L-tyrosine + phosphate = [glutamine synthetase]-L-tyrosine + ADP. It catalyses the reaction [glutamine synthetase]-L-tyrosine + ATP = [glutamine synthetase]-O(4)-(5'-adenylyl)-L-tyrosine + diphosphate. Functionally, involved in the regulation of glutamine synthetase GlnA, a key enzyme in the process to assimilate ammonia. When cellular nitrogen levels are high, the C-terminal adenylyl transferase (AT) inactivates GlnA by covalent transfer of an adenylyl group from ATP to specific tyrosine residue of GlnA, thus reducing its activity. Conversely, when nitrogen levels are low, the N-terminal adenylyl removase (AR) activates GlnA by removing the adenylyl group by phosphorolysis, increasing its activity. The regulatory region of GlnE binds the signal transduction protein PII (GlnB) which indicates the nitrogen status of the cell. The polypeptide is Bifunctional glutamine synthetase adenylyltransferase/adenylyl-removing enzyme (Methylococcus capsulatus (strain ATCC 33009 / NCIMB 11132 / Bath)).